A 344-amino-acid chain; its full sequence is Protein pelota homolog (344 aa).

It belongs to the eukaryotic release factor 1 family. Pelota subfamily. In terms of assembly, monomer. A divalent metal cation serves as cofactor.

Its subcellular location is the cytoplasm. May function in recognizing stalled ribosomes, interact with stem-loop structures in stalled mRNA molecules, and effect endonucleolytic cleavage of the mRNA. May play a role in the release non-functional ribosomes and degradation of damaged mRNAs. Has endoribonuclease activity. The chain is Protein pelota homolog from Saccharolobus islandicus (strain Y.N.15.51 / Yellowstone #2) (Sulfolobus islandicus).